A 367-amino-acid chain; its full sequence is tRNA-specific 2-thiouridylase MnmA (367 aa).

Residues 11 to 18 (GLSGGVDS) and methionine 37 contribute to the ATP site. The segment at 109–111 (NPD) is interaction with target base in tRNA. The Nucleophile role is filled by cysteine 114. A disulfide bond links cysteine 114 and cysteine 211. Glycine 139 is an ATP binding site. Positions 161–163 (KDQ) are interaction with tRNA. Cysteine 211 (cysteine persulfide intermediate) is an active-site residue.

Belongs to the MnmA/TRMU family.

It is found in the cytoplasm. The enzyme catalyses S-sulfanyl-L-cysteinyl-[protein] + uridine(34) in tRNA + AH2 + ATP = 2-thiouridine(34) in tRNA + L-cysteinyl-[protein] + A + AMP + diphosphate + H(+). Catalyzes the 2-thiolation of uridine at the wobble position (U34) of tRNA, leading to the formation of s(2)U34. This Mycoplasma genitalium (strain ATCC 33530 / DSM 19775 / NCTC 10195 / G37) (Mycoplasmoides genitalium) protein is tRNA-specific 2-thiouridylase MnmA.